A 483-amino-acid polypeptide reads, in one-letter code: Protein PLASTID TRANSCRIPTIONALLY ACTIVE 14 (483 aa).

A chloroplast-targeting transit peptide spans methionine 1–proline 62. In terms of domain architecture, SET spans tyrosine 80–methionine 325. S-adenosyl-L-methionine is bound at residue tyrosine 324.

Belongs to the class V-like SAM-binding methyltransferase superfamily. In terms of assembly, component of the transcriptionally active chromosome (TAC) complexes. Interacts with PTAC12/HMR/PAP5 and PTAC7. Binds to SL1/MTERF3. Mostly expressed in leaves, flowers and seedlings, and, to a lower extent, in stems and roots.

It localises to the plastid. The protein resides in the chloroplast thylakoid. In terms of biological role, essential for chloroplast development, especially for thylakoid formation. Involved in plastid gene expression, probably by maintaining plastid-encoded RNA polymerase (PEP) activity. This Arabidopsis thaliana (Mouse-ear cress) protein is Protein PLASTID TRANSCRIPTIONALLY ACTIVE 14.